The sequence spans 358 residues: Methylthioribose-1-phosphate isomerase (358 aa).

Residue M1 is modified to N-acetylmethionine. The Proton donor role is filled by D248.

This sequence belongs to the eIF-2B alpha/beta/delta subunits family. MtnA subfamily.

Its subcellular location is the cytoplasm. It is found in the nucleus. The enzyme catalyses 5-(methylsulfanyl)-alpha-D-ribose 1-phosphate = 5-(methylsulfanyl)-D-ribulose 1-phosphate. It participates in amino-acid biosynthesis; L-methionine biosynthesis via salvage pathway; L-methionine from S-methyl-5-thio-alpha-D-ribose 1-phosphate: step 1/6. Its function is as follows. Catalyzes the interconversion of methylthioribose-1-phosphate (MTR-1-P) into methylthioribulose-1-phosphate (MTRu-1-P). This chain is Methylthioribose-1-phosphate isomerase, found in Bos taurus (Bovine).